The primary structure comprises 92 residues: Small ribosomal subunit protein uS19c (92 aa).

This sequence belongs to the universal ribosomal protein uS19 family.

Its subcellular location is the plastid. Protein S19 forms a complex with S13 that binds strongly to the 16S ribosomal RNA. The sequence is that of Small ribosomal subunit protein uS19c from Cuscuta obtusiflora (Peruvian dodder).